Consider the following 348-residue polypeptide: Flavonol synthase/flavanone 3-hydroxylase (348 aa).

The Fe2OG dioxygenase domain occupies 209–309; that stretch reads EIVYLLKINY…RMSWPVFLEP (101 aa). Positions 234, 236, and 290 each coordinate Fe cation.

The protein belongs to the iron/ascorbate-dependent oxidoreductase family. The cofactor is L-ascorbate. Fe cation is required as a cofactor.

It localises to the cytoplasm. The catalysed reaction is a (2R,3R)-dihydroflavonol + 2-oxoglutarate + O2 = a flavonol + succinate + CO2 + H2O. It carries out the reaction a (2S)-flavan-4-one + 2-oxoglutarate + O2 = a (2R,3R)-dihydroflavonol + succinate + CO2. The protein operates within secondary metabolite biosynthesis; flavonoid biosynthesis. Its function is as follows. Catalyzes the formation of flavonols from dihydroflavonols. It can act on dihydrokaempferol to produce kaempferol, on dihydroquercetin to produce quercitin and on dihydromyricetin to produce myricetin. This chain is Flavonol synthase/flavanone 3-hydroxylase (FL), found in Petunia hybrida (Petunia).